Consider the following 574-residue polypeptide: GRB2-associated-binding protein 4 (574 aa).

The segment at 1–33 is disordered; the sequence is MSLPSPSPSRELCPPDPAFAPLSSWPGSGPAGG. The PH domain maps to 39 to 152; the sequence is HVLYSGWLRK…WVQSICQICG (114 aa). Disordered stretches follow at residues 176 to 200, 215 to 234, 293 to 331, and 418 to 513; these read PAEP…PVSH, LRSH…ASFS, SLAS…RPAE, and PPVN…PRST. Positions 181–193 are enriched in polar residues; sequence CSHQHLPQEQEPT. Composition is skewed to polar residues over residues 302 to 318 and 424 to 442; these read GSLT…SGKY and LKPN…NNRV. Low complexity predominate over residues 457–478; it reads SGTSHTFDSSSSQHPISTQSIT. Residues 502 to 513 are compositionally biased toward polar residues; sequence GGTSSSAPPRST.

It belongs to the GAB family.

In Homo sapiens (Human), this protein is GRB2-associated-binding protein 4 (GAB4).